Here is a 253-residue protein sequence, read N- to C-terminus: Uridine phosphorylase (253 aa).

Belongs to the PNP/UDP phosphorylase family. Homohexamer.

The protein resides in the cytoplasm. The catalysed reaction is uridine + phosphate = alpha-D-ribose 1-phosphate + uracil. The protein operates within pyrimidine metabolism; UMP biosynthesis via salvage pathway; uracil from uridine (phosphorylase route): step 1/1. Functionally, catalyzes the reversible phosphorylytic cleavage of uridine to uracil and ribose-1-phosphate. Shows weak activity towards deoxyuridine and thymidine. The produced molecules are then utilized as carbon and energy sources or in the rescue of pyrimidine bases for nucleotide synthesis. This is Uridine phosphorylase from Escherichia coli (strain K12).